The primary structure comprises 340 residues: Heat-inducible transcription repressor HrcA (340 aa).

This sequence belongs to the HrcA family.

Functionally, negative regulator of class I heat shock genes (grpE-dnaK-dnaJ and groELS operons). Prevents heat-shock induction of these operons. The chain is Heat-inducible transcription repressor HrcA from Burkholderia cenocepacia (strain ATCC BAA-245 / DSM 16553 / LMG 16656 / NCTC 13227 / J2315 / CF5610) (Burkholderia cepacia (strain J2315)).